We begin with the raw amino-acid sequence, 320 residues long: 1-aminocyclopropane-1-carboxylate oxidase 3 (320 aa).

A Fe2OG dioxygenase domain is found at 154–254 (PNFGTKVSNY…RMSIASFYNP (101 aa)). Histidine 178, aspartate 180, and histidine 235 together coordinate Fe cation.

It belongs to the iron/ascorbate-dependent oxidoreductase family. Requires Fe cation as cofactor. As to expression, flowers.

It catalyses the reaction 1-aminocyclopropane-1-carboxylate + L-ascorbate + O2 = ethene + L-dehydroascorbate + hydrogen cyanide + CO2 + 2 H2O. It participates in alkene biosynthesis; ethylene biosynthesis via S-adenosyl-L-methionine; ethylene from S-adenosyl-L-methionine: step 2/2. This is 1-aminocyclopropane-1-carboxylate oxidase 3 (ACO3) from Cucumis melo (Muskmelon).